Reading from the N-terminus, the 367-residue chain is Glutamate 5-kinase (367 aa).

K17 lines the ATP pocket. The substrate site is built by S57, D144, and N156. Residues 176 to 177 and 217 to 223 contribute to the ATP site; these read SD and TGGMTSK. A PUA domain is found at 279–357; that stretch reads AGALTLDEGA…SELPGELRRP (79 aa).

Belongs to the glutamate 5-kinase family.

It is found in the cytoplasm. The catalysed reaction is L-glutamate + ATP = L-glutamyl 5-phosphate + ADP. It functions in the pathway amino-acid biosynthesis; L-proline biosynthesis; L-glutamate 5-semialdehyde from L-glutamate: step 1/2. In terms of biological role, catalyzes the transfer of a phosphate group to glutamate to form L-glutamate 5-phosphate. The protein is Glutamate 5-kinase of Mycobacterium avium (strain 104).